A 54-amino-acid chain; its full sequence is Rubredoxin (54 aa).

The Rubredoxin-like domain occupies 2 to 52 (AKWVCKICGYIYDEDAGDPDNGISPGTKFEELPDDWVCPICGAPKSEFEKL). Fe cation is bound by residues Cys6, Cys9, Cys39, and Cys42.

It belongs to the rubredoxin family. Fe(3+) serves as cofactor.

Its function is as follows. Rubredoxin is a small nonheme, iron protein lacking acid-labile sulfide. Its single Fe, chelated to 4 Cys, functions as an electron acceptor and may also stabilize the conformation of the molecule. This Pyrococcus furiosus (strain ATCC 43587 / DSM 3638 / JCM 8422 / Vc1) protein is Rubredoxin (rub).